The primary structure comprises 488 residues: RNA binding exosome specificity factor Mmi1 (488 aa).

Composition is skewed to polar residues over residues 1–14, 33–47, and 54–66; these read MSNT…SSKS, LNES…TTHT, and SVLS…NFSS. 2 disordered regions span residues 1 to 20 and 25 to 80; these read MSNT…ELPN and RSLW…DAPI. Residues 71–80 are compositionally biased toward basic and acidic residues; it reads PAPESHDAPI. The tract at residues 95-122 is interaction with erh1; sequence GKYDFSRHCTDYGHSYEWPYFRSLRRES. 2 disordered regions span residues 163–185 and 225–261; these read SRLH…RRLA and SYPV…TRAS. Residue T176 is modified to Phosphothreonine. Phosphoserine is present on residues S178, S230, S231, S261, S263, and S265. A compositionally biased stretch (low complexity) spans 289–299; sequence SYLLSNSSNDS. Positions 289–328 are disordered; sequence SYLLSNSSNDSASRKEKPKARASTPPPLNFSRASEHRNEK. At S311 the chain carries Phosphoserine. T312 bears the Phosphothreonine mark. A YTH domain is found at 350–476; that stretch reads SRYFIMLCDN…DEGSRLCTLI (127 aa).

In terms of assembly, component of the erh1-mmi1 complex composed of mmi1 and erh1. Interacts (via N-terminus) with erh1 in a 2:2 stoichiometry. Interacts with rrp6.

The protein resides in the nucleus. Its function is as follows. RNA-binding protein that recognizes and binds N6-methyladenosine (m6A)-containing RNAs, a modification present at internal sites of mRNAs and some non-coding RNAs. Functions alone and as part of the erh1-mmi1 complex, to recruit the CCR4-NOT complex and the NURS complex to target RNAs. Suppresses the meiotic program during vegetative growth and promotes the meiotic program during mating. Binds to DSR (determinant of selective removal) regions in meiotic mRNA, and recruits the NURS complex to targets. Recruitment of NURS complex to target mRNAs promotes mRNA decay by engagement of the nuclear exosome, and formation of heterochromatin islands at meiotic genes silenced by the exosome. Recruitment of the CCR4-NOT complex to target RNAs promotes heterochromatin formation at RNAi-dependent heterochromatin domains (HOODs), including a subset of meiotic genes, lncRNAs and retrotransposons. Recruitment of the CCR4-NOT complex to rDNA promotes rDNA heterochromatin assembly. Promotes non-canonical transcription termination at meiotic genes and prevents lncRNA transcription from invading and repressing adjacent genes. This chain is RNA binding exosome specificity factor Mmi1 (mmi1), found in Schizosaccharomyces pombe (strain 972 / ATCC 24843) (Fission yeast).